Here is a 261-residue protein sequence, read N- to C-terminus: Rho-related GTP-binding protein RhoU (261 aa).

The tract at residues 1–48 is disordered; the sequence is MAPQQGRPALPARCEPPAAPPVPPRRERGGRGARGPGVSGGRGRAGGA. Low complexity predominate over residues 7-16; it reads RPALPARCEP. Positions 32–48 are enriched in gly residues; sequence GARGPGVSGGRGRAGGA. Residues 59-66, 106-110, and 164-167 contribute to the GTP site; these read GDGAVGKT, DTAGQ, and TQSD. Residues K180 and K251 each participate in a glycyl lysine isopeptide (Lys-Gly) (interchain with G-Cter in ubiquitin) cross-link. C259 is lipidated: S-palmitoyl cysteine.

The protein belongs to the small GTPase superfamily. Rho family. In terms of assembly, interacts with PAK1. Interacts with PAK3. Interacts with ARHGAP30 in a GTP-independent manner. In its GTP-loaded conformation, interacts with ARHGAP31. Interacts with PTK2B/PYK2. Interacts with PAK4; interaction protects RHOU from ubiquitination and subsequent degradation. Requires Mg(2+) as cofactor. Tyrosine phosphorylated by SRC in response to PTK2B/PYK2 activation. Post-translationally, ubiquitinated. 'Lys-48'-linked ubiquitination at Lys-180 and Lys-251 by the ECS(RAB40A) complex leading to its degradation.

It localises to the cell membrane. It is found in the golgi apparatus membrane. Its subcellular location is the cell junction. The protein localises to the focal adhesion. The protein resides in the cell projection. It localises to the podosome. In terms of biological role, binds to and activates protein kinase PAK1. Plays a role in the regulation of cell morphology, cytoskeletal organization and focal adhesion assembly during cell migration. Also stimulates quiescent cells to reenter the cell cycle. Has no detectable GTPase activity but its high intrinsic guanine nucleotide exchange activity suggests it is constitutively GTP-bound. This Mus musculus (Mouse) protein is Rho-related GTP-binding protein RhoU.